Consider the following 365-residue polypeptide: Eukaryotic translation initiation factor 3 subunit H (365 aa).

Residues 11–160 (VKVEALVVMK…LRAFRLSPKF (150 aa)) form the MPN domain.

It belongs to the eIF-3 subunit H family. As to quaternary structure, component of the eukaryotic translation initiation factor 3 (eIF-3) complex.

The protein resides in the cytoplasm. Its function is as follows. Component of the eukaryotic translation initiation factor 3 (eIF-3) complex, which is involved in protein synthesis of a specialized repertoire of mRNAs and, together with other initiation factors, stimulates binding of mRNA and methionyl-tRNAi to the 40S ribosome. The eIF-3 complex specifically targets and initiates translation of a subset of mRNAs involved in cell proliferation. This chain is Eukaryotic translation initiation factor 3 subunit H, found in Aspergillus clavatus (strain ATCC 1007 / CBS 513.65 / DSM 816 / NCTC 3887 / NRRL 1 / QM 1276 / 107).